Reading from the N-terminus, the 321-residue chain is Acetylglutamate kinase (321 aa).

Substrate contacts are provided by residues G88–G89, R110, and N216.

This sequence belongs to the acetylglutamate kinase family. ArgB subfamily.

The protein resides in the cytoplasm. The catalysed reaction is N-acetyl-L-glutamate + ATP = N-acetyl-L-glutamyl 5-phosphate + ADP. Its pathway is amino-acid biosynthesis; L-arginine biosynthesis; N(2)-acetyl-L-ornithine from L-glutamate: step 2/4. Functionally, catalyzes the ATP-dependent phosphorylation of N-acetyl-L-glutamate. The polypeptide is Acetylglutamate kinase (Ehrlichia chaffeensis (strain ATCC CRL-10679 / Arkansas)).